Consider the following 172-residue polypeptide: MAHTLATPVAPSVSLICNTKLSVSLSSSSLAFRPVNPKNGGGLSIKCVRVGNVEIPNNKRVEYSLQYIHGIGRSRARQILCDLTLENKLTKELSEDELLQVRDEVTKYMIEGDLRRFNAIAIRRLKEIQCYRGVRHIQGLPCRGQRTKNNCRTLKRGKRVQIAGKKKPPGPK.

The N-terminal 47 residues, 1–47 (MAHTLATPVAPSVSLICNTKLSVSLSSSSLAFRPVNPKNGGGLSIKC), are a transit peptide targeting the chloroplast.

Component of the chloroplast small ribosomal subunit (SSU). Mature 70S chloroplast ribosomes of higher plants consist of a small (30S) and a large (50S) subunit. The 30S small subunit contains 1 molecule of ribosomal RNA (16S rRNA) and 24 different proteins. The 50S large subunit contains 3 rRNA molecules (23S, 5S and 4.5S rRNA) and 33 different proteins. uS13c interacts with translation factor pY (PSRP1).

The protein localises to the plastid. It is found in the chloroplast. Functionally, component of the chloroplast ribosome (chloro-ribosome), a dedicated translation machinery responsible for the synthesis of chloroplast genome-encoded proteins, including proteins of the transcription and translation machinery and components of the photosynthetic apparatus. The polypeptide is Small ribosomal subunit protein uS13c (RPS13) (Spinacia oleracea (Spinach)).